Reading from the N-terminus, the 366-residue chain is Growth hormone secretagogue receptor type 1 (366 aa).

The Extracellular portion of the chain corresponds to 1 to 40; it reads MWNATPSEEPGSNLTRAELGWDAPPGNDSLADELLQLFPA. 2 N-linked (GlcNAc...) asparagine glycosylation sites follow: N13 and N27. A helical membrane pass occupies residues 41-66; the sequence is PLLAGVTATCVALFVVGIAGNLLTML. Residues 67–72 lie on the Cytoplasmic side of the membrane; sequence VVSRFR. The chain crosses the membrane as a helical span at residues 73–96; sequence ELRTTTNLYLSSMAFSDLLIFLCM. Residues 97 to 117 are Extracellular-facing; the sequence is PLDLVRLWQYRPWNFGDLLCK. A disulfide bond links C116 and C198. A helical transmembrane segment spans residues 118–139; it reads LFQFVSESCTYATVLTITALSV. Topologically, residues 140-162 are cytoplasmic; sequence ERYFAICFPLRAKVVVTKGRVKL. The helical transmembrane segment at 163-183 threads the bilayer; the sequence is VILVIWALAFCSAGPIFVLVG. Over 184-211 the chain is Extracellular; it reads VEHENGTDPQDTNECRATEFAVRSGLLT. N-linked (GlcNAc...) asparagine glycosylation is present at N188. A helical transmembrane segment spans residues 212–235; that stretch reads IMVWVSSVFFFLPVFCLTVLYSLI. At 236-263 the chain is on the cytoplasmic side; that stretch reads GRKLWRRKRGDGAVGSSLRDQNHRQTVK. The chain crosses the membrane as a helical span at residues 264–285; it reads MLAVVVFAFILCWLPFHVGRYL. Topologically, residues 286-302 are extracellular; it reads FSKSFEPGSLEIAQISQ. Residues 303-326 form a helical membrane-spanning segment; the sequence is YCNLVSFVLFYLSAAINPILYNIM. The Cytoplasmic segment spans residues 327-366; sequence SKKYRVAVFKLLGFEPFSQRKLSTLKDESSRAWTKSSINT.

It belongs to the G-protein coupled receptor 1 family.

It localises to the cell membrane. Its function is as follows. Receptor for ghrelin, coupled to G-alpha-11 proteins. Stimulates growth hormone secretion. Also binds other growth hormone releasing peptides (GHRP) (e.g. Met-enkephalin and GHRP-6) as well as non-peptide, low molecular weight secretagogues (e.g. L-692,429, MK-0677, adenosine). The polypeptide is Growth hormone secretagogue receptor type 1 (GHSR) (Oryctolagus cuniculus (Rabbit)).